The primary structure comprises 1399 residues: DNA-directed RNA polymerase subunit beta' (1399 aa).

The Zn(2+) site is built by Cys-70, Cys-72, Cys-85, and Cys-88. Residues Asp-460, Asp-462, and Asp-464 each coordinate Mg(2+). The Zn(2+) site is built by Cys-814, Cys-888, Cys-895, and Cys-898.

This sequence belongs to the RNA polymerase beta' chain family. The RNAP catalytic core consists of 2 alpha, 1 beta, 1 beta' and 1 omega subunit. When a sigma factor is associated with the core the holoenzyme is formed, which can initiate transcription. It depends on Mg(2+) as a cofactor. Requires Zn(2+) as cofactor.

The enzyme catalyses RNA(n) + a ribonucleoside 5'-triphosphate = RNA(n+1) + diphosphate. In terms of biological role, DNA-dependent RNA polymerase catalyzes the transcription of DNA into RNA using the four ribonucleoside triphosphates as substrates. This is DNA-directed RNA polymerase subunit beta' from Pseudomonas putida (strain ATCC 47054 / DSM 6125 / CFBP 8728 / NCIMB 11950 / KT2440).